A 486-amino-acid chain; its full sequence is Membrane-bound lytic murein transglycosylase F (486 aa).

Positions 1–28 are cleaved as a signal peptide; it reads MFAHTLFRKRCAIWLLAIGIFLMLGSCA. Positions 29–267 are non-LT domain; the sequence is EKPSELERIK…RLRERYYGHV (239 aa). Residues 268-486 are LT domain; sequence DVLGYVGAYA…TDLMEELPPL (219 aa). The active site involves Glu-314.

This sequence in the N-terminal section; belongs to the bacterial solute-binding protein 3 family. The protein in the C-terminal section; belongs to the transglycosylase Slt family.

The protein localises to the cell outer membrane. It carries out the reaction Exolytic cleavage of the (1-&gt;4)-beta-glycosidic linkage between N-acetylmuramic acid (MurNAc) and N-acetylglucosamine (GlcNAc) residues in peptidoglycan, from either the reducing or the non-reducing ends of the peptidoglycan chains, with concomitant formation of a 1,6-anhydrobond in the MurNAc residue.. Functionally, murein-degrading enzyme that degrades murein glycan strands and insoluble, high-molecular weight murein sacculi, with the concomitant formation of a 1,6-anhydromuramoyl product. Lytic transglycosylases (LTs) play an integral role in the metabolism of the peptidoglycan (PG) sacculus. Their lytic action creates space within the PG sacculus to allow for its expansion as well as for the insertion of various structures such as secretion systems and flagella. The chain is Membrane-bound lytic murein transglycosylase F from Stutzerimonas stutzeri (strain A1501) (Pseudomonas stutzeri).